Reading from the N-terminus, the 278-residue chain is Phosphonates import ATP-binding protein PhnC 2 (278 aa).

The region spanning 5–253 (IRVDSLNKTF…FLNELYGAEG (249 aa)) is the ABC transporter domain. 37 to 44 (GASGSGKS) contributes to the ATP binding site.

This sequence belongs to the ABC transporter superfamily. Phosphonates importer (TC 3.A.1.9.1) family. The complex is composed of two ATP-binding proteins (PhnC), two transmembrane proteins (PhnE) and a solute-binding protein (PhnD).

The protein resides in the cell inner membrane. It catalyses the reaction phosphonate(out) + ATP + H2O = phosphonate(in) + ADP + phosphate + H(+). Its function is as follows. Part of the ABC transporter complex PhnCDE involved in phosphonates import. Responsible for energy coupling to the transport system. This chain is Phosphonates import ATP-binding protein PhnC 2, found in Pseudomonas aeruginosa (strain ATCC 15692 / DSM 22644 / CIP 104116 / JCM 14847 / LMG 12228 / 1C / PRS 101 / PAO1).